Consider the following 264-residue polypeptide: Sulfur carrier protein FdhD (264 aa).

Cys-107 (cysteine persulfide intermediate) is an active-site residue.

Belongs to the FdhD family.

The protein resides in the cytoplasm. Functionally, required for formate dehydrogenase (FDH) activity. Acts as a sulfur carrier protein that transfers sulfur from IscS to the molybdenum cofactor prior to its insertion into FDH. In Staphylococcus haemolyticus (strain JCSC1435), this protein is Sulfur carrier protein FdhD.